Here is a 210-residue protein sequence, read N- to C-terminus: Phosphoheptose isomerase (210 aa).

The region spanning 38 to 202 (IAACLARGGK…ENVAALAPYL (165 aa)) is the SIS domain. Substrate is bound at residue 53–55 (NGG). Residues His-62 and Glu-66 each contribute to the Zn(2+) site. Substrate contacts are provided by residues Glu-66, 95-96 (ND), 121-123 (STS), Ser-126, and Gln-173. Residues Gln-173 and His-181 each coordinate Zn(2+).

The protein belongs to the SIS family. GmhA subfamily. In terms of assembly, homotetramer. Zn(2+) serves as cofactor.

The protein localises to the cytoplasm. The catalysed reaction is 2 D-sedoheptulose 7-phosphate = D-glycero-alpha-D-manno-heptose 7-phosphate + D-glycero-beta-D-manno-heptose 7-phosphate. It participates in carbohydrate biosynthesis; D-glycero-D-manno-heptose 7-phosphate biosynthesis; D-glycero-alpha-D-manno-heptose 7-phosphate and D-glycero-beta-D-manno-heptose 7-phosphate from sedoheptulose 7-phosphate: step 1/1. In terms of biological role, catalyzes the isomerization of sedoheptulose 7-phosphate in D-glycero-D-manno-heptose 7-phosphate. This chain is Phosphoheptose isomerase, found in Desulfovibrio desulfuricans (strain ATCC 27774 / DSM 6949 / MB).